Here is an 809-residue protein sequence, read N- to C-terminus: Ribonuclease Z 1 (809 aa).

Residues 74-93 (ISSPDTYDSSSSSSTTSVSD) are disordered.

This sequence belongs to the RNase Z family. Requires Zn(2+) as cofactor.

It localises to the nucleus. Its subcellular location is the cytoplasm. It catalyses the reaction Endonucleolytic cleavage of RNA, removing extra 3' nucleotides from tRNA precursor, generating 3' termini of tRNAs. A 3'-hydroxy group is left at the tRNA terminus and a 5'-phosphoryl group is left at the trailer molecule.. Its function is as follows. Zinc phosphodiesterase, which displays some tRNA 3'-processing endonuclease activity. May be involved in tRNA maturation, by removing a 3'-trailer from precursor tRNA. The sequence is that of Ribonuclease Z 1 (trz1) from Schizosaccharomyces pombe (strain 972 / ATCC 24843) (Fission yeast).